Here is a 506-residue protein sequence, read N- to C-terminus: D-alanine--D-alanyl carrier protein ligase (506 aa).

Position 152–153 (152–153) interacts with ATP; that stretch reads TS. A D-alanine-binding site is contributed by D197. 292 to 297 is an ATP binding site; that stretch reads NTYGPT. D-alanine is bound at residue V301. Residues D383, 395 to 398, and K494 contribute to the ATP site; that span reads YRGR. K494 lines the D-alanine pocket.

The protein belongs to the ATP-dependent AMP-binding enzyme family. DltA subfamily.

Its subcellular location is the cytoplasm. It catalyses the reaction holo-[D-alanyl-carrier protein] + D-alanine + ATP = D-alanyl-[D-alanyl-carrier protein] + AMP + diphosphate. It participates in cell wall biogenesis; lipoteichoic acid biosynthesis. In terms of biological role, catalyzes the first step in the D-alanylation of lipoteichoic acid (LTA), the activation of D-alanine and its transfer onto the D-alanyl carrier protein (Dcp) DltC. In an ATP-dependent two-step reaction, forms a high energy D-alanyl-AMP intermediate, followed by transfer of the D-alanyl residue as a thiol ester to the phosphopantheinyl prosthetic group of the Dcp. D-alanylation of LTA plays an important role in modulating the properties of the cell wall in Gram-positive bacteria, influencing the net charge of the cell wall. In Lacticaseibacillus paracasei (strain ATCC 334 / BCRC 17002 / CCUG 31169 / CIP 107868 / KCTC 3260 / NRRL B-441) (Lactobacillus paracasei), this protein is D-alanine--D-alanyl carrier protein ligase.